We begin with the raw amino-acid sequence, 615 residues long: MALLQISEPGLSAAPHQRRLAAGIDLGTTHSLVAVVRSGQTETLADSENRHLLPSVVQYRKEDIQVGWQARQQAASDPVNTVSSVKRMMGRSLADIQKRYPNLPYQFQASENGLPLINTAAGLVDPIQVSSDILKSLAQRAEKTLDGKLDGVVITVPAYFDDAQRQGTKDAARLAGLHVLRLLNEPTAAAIAYGLDSGQEGVIAVYDLGGGTFDVSILRLSRGVFEVLATGGDTALGGDDFDLLLANWIREQAGISDNDHRLQRQLLDIATQTKIVLSEADSAEICFADWQGRITRNEFNELITSLVKRTLLSCRRALKDAGVTADEVLQVVMVGGSTRVPLVRNMVGEFFDREPLTSIDPDRVVAIGAAIQADILVGNKPDSEMLLLDVIPLSLGLETMGGLVEKVIPRNTTIPVARAQEFTTFKDGQSAMSIHVVQGERELVNDCRSLARFTLRGIPPLAAGGAHIRVTFQVDADGLLSVSALEKSTGIESSIQVKPSYGLSDEEIARMLKDSMTNAQEDIQVRKLAEQKVEAARVLESLTGALEKDADLLSQEEQVAIDAAVQALIESVQGTSPDAIESAIKQLDKQTQEFAARRMDTSIRRALAGHSVDEI.

This sequence belongs to the heat shock protein 70 family.

In terms of biological role, chaperone involved in the maturation of iron-sulfur cluster-containing proteins. Has a low intrinsic ATPase activity which is markedly stimulated by HscB. Involved in the maturation of IscU. This chain is Chaperone protein HscA, found in Xenorhabdus nematophila (strain ATCC 19061 / DSM 3370 / CCUG 14189 / LMG 1036 / NCIMB 9965 / AN6).